We begin with the raw amino-acid sequence, 603 residues long: Mitochondrial distribution and morphology protein 34 (603 aa).

One can recognise an SMP-LTD domain in the interval 1 to 205 (MAFNFNWSPL…SPEYQEIETE (205 aa)). Residues 320–332 (KSGASSVASGSTG) show a composition bias toward low complexity. Disordered regions lie at residues 320-511 (KSGA…PLLR) and 558-603 (IARK…AYVA). Polar residues predominate over residues 333–351 (NETLSSRPTLASSYSTSAG). The segment covering 371–380 (VVDLRRKDGA) has biased composition (basic and acidic residues). Residues 383 to 403 (GVSTEANTPLPSTQVSDTSSV) are compositionally biased toward polar residues. A compositionally biased stretch (low complexity) spans 452–463 (PLLAPAPLIPNA). Residues 500 to 509 (RQAQQSTSPL) are compositionally biased toward polar residues. A compositionally biased stretch (basic and acidic residues) spans 558-570 (IARKVQEEKDKSS).

This sequence belongs to the MDM34 family. Component of the ER-mitochondria encounter structure (ERMES) or MDM complex, composed of mmm1, mdm10, mdm12 and mdm34.

It localises to the mitochondrion outer membrane. Its function is as follows. Component of the ERMES/MDM complex, which serves as a molecular tether to connect the endoplasmic reticulum (ER) and mitochondria. Components of this complex are involved in the control of mitochondrial shape and protein biogenesis, and function in nonvesicular lipid trafficking between the ER and mitochondria. Mdm34 is required for the interaction of the ER-resident membrane protein mmm1 and the outer mitochondrial membrane-resident beta-barrel protein mdm10. In Pyrenophora tritici-repentis (strain Pt-1C-BFP) (Wheat tan spot fungus), this protein is Mitochondrial distribution and morphology protein 34.